The sequence spans 353 residues: Glutamine synthetase nodule isozyme (353 aa).

The GS beta-grasp domain maps to 19–99 (IIAEYIWVGG…VMCDTYTPAG (81 aa)). Residues 106 to 353 (KRHAAAKIFS…TSMIAETTLL (248 aa)) enclose the GS catalytic domain.

The protein belongs to the glutamine synthetase family. Homooctamer.

The protein localises to the cytoplasm. It catalyses the reaction L-glutamate + NH4(+) + ATP = L-glutamine + ADP + phosphate + H(+). This Lupinus luteus (European yellow lupine) protein is Glutamine synthetase nodule isozyme.